A 274-amino-acid polypeptide reads, in one-letter code: MRLCGFEAGLDKPLFLIAGPCVIESEELALETAGYLKEMCSQLNIPFIYKSSFDKANRSSISSYRGPGFEKGLSILEKVKSQIGVPVLTDVHEDTPLFEVSSVVDVLQTPAFLCRQTNFIQKVAAMNKPVNIKKGQFLAPWEMKHVIAKAKAQGNEQIMACERGVSFGYNNLVSDMRSLVIMRETGCPVVYDATHSVQLPGGNNGVSGGQREFIPALARAAVAVGISGLFMETHPDPDKALSDGPNSWPLDKMKQLLESLKAADEVYKKYSTDF.

This sequence belongs to the KdsA family.

It is found in the cytoplasm. The enzyme catalyses D-arabinose 5-phosphate + phosphoenolpyruvate + H2O = 3-deoxy-alpha-D-manno-2-octulosonate-8-phosphate + phosphate. It participates in carbohydrate biosynthesis; 3-deoxy-D-manno-octulosonate biosynthesis; 3-deoxy-D-manno-octulosonate from D-ribulose 5-phosphate: step 2/3. Its pathway is bacterial outer membrane biogenesis; lipopolysaccharide biosynthesis. The polypeptide is 2-dehydro-3-deoxyphosphooctonate aldolase (Legionella pneumophila (strain Corby)).